Consider the following 131-residue polypeptide: Protein GLUTAMINE DUMPER 5 (131 aa).

The Extracellular segment spans residues 1–34 (MRQFPSIRGNINEKMMTTMVESQTRSPWRTPVPY). The helical transmembrane segment at 35–55 (LFGGLAAMLGLIAFALLLLAC) threads the bilayer. Topologically, residues 56–131 (SYWRLSRQTE…GESKVTEENH (76 aa)) are cytoplasmic. Positions 88 to 92 (VIMAG) match the VIMAG motif.

This sequence belongs to the GLUTAMINE DUMPER 1 (TC 9.B.60) family. As to expression, expressed in the vascular tissues. Also detected in guard cells.

Its subcellular location is the membrane. In terms of biological role, probable subunit of an amino acid transporter involved in the regulation of the amino acid metabolism. Stimulates amino acid export by activating nonselective amino acid facilitators. This Arabidopsis thaliana (Mouse-ear cress) protein is Protein GLUTAMINE DUMPER 5 (GDU5).